A 108-amino-acid polypeptide reads, in one-letter code: Small ribosomal subunit protein bS18 (108 aa).

The segment covering 1 to 12 (MSDITKQPANNI) has biased composition (polar residues). Residues 1-33 (MSDITKQPANNISSDDKKEVAKASAKSSVEGAK) are disordered.

The protein belongs to the bacterial ribosomal protein bS18 family. In terms of assembly, part of the 30S ribosomal subunit. Forms a tight heterodimer with protein bS6.

Binds as a heterodimer with protein bS6 to the central domain of the 16S rRNA, where it helps stabilize the platform of the 30S subunit. This Mycoplasmoides gallisepticum (strain R(low / passage 15 / clone 2)) (Mycoplasma gallisepticum) protein is Small ribosomal subunit protein bS18.